Here is a 252-residue protein sequence, read N- to C-terminus: 2-succinyl-6-hydroxy-2,4-cyclohexadiene-1-carboxylate synthase (252 aa).

It belongs to the AB hydrolase superfamily. MenH family. As to quaternary structure, monomer.

The enzyme catalyses 5-enolpyruvoyl-6-hydroxy-2-succinyl-cyclohex-3-ene-1-carboxylate = (1R,6R)-6-hydroxy-2-succinyl-cyclohexa-2,4-diene-1-carboxylate + pyruvate. It participates in quinol/quinone metabolism; 1,4-dihydroxy-2-naphthoate biosynthesis; 1,4-dihydroxy-2-naphthoate from chorismate: step 3/7. The protein operates within quinol/quinone metabolism; menaquinone biosynthesis. In terms of biological role, catalyzes a proton abstraction reaction that results in 2,5-elimination of pyruvate from 2-succinyl-5-enolpyruvyl-6-hydroxy-3-cyclohexene-1-carboxylate (SEPHCHC) and the formation of 2-succinyl-6-hydroxy-2,4-cyclohexadiene-1-carboxylate (SHCHC). This Klebsiella pneumoniae subsp. pneumoniae (strain ATCC 700721 / MGH 78578) protein is 2-succinyl-6-hydroxy-2,4-cyclohexadiene-1-carboxylate synthase.